The primary structure comprises 259 residues: Pimeloyl-[acyl-carrier protein] methyl ester esterase (259 aa).

In terms of domain architecture, AB hydrolase-1 spans 16–244 (LVFIHGWGLN…ASHAPFLSHP (229 aa)). Substrate contacts are provided by residues Trp-22, 82–83 (SL), and 143–147 (FFNIQ). The active-site Nucleophile is Ser-82. Residues Asp-207 and His-237 contribute to the active site. A substrate-binding site is contributed by His-237.

This sequence belongs to the AB hydrolase superfamily. Carboxylesterase BioH family. As to quaternary structure, monomer.

The protein localises to the cytoplasm. The enzyme catalyses 6-carboxyhexanoyl-[ACP] methyl ester + H2O = 6-carboxyhexanoyl-[ACP] + methanol + H(+). It functions in the pathway cofactor biosynthesis; biotin biosynthesis. Functionally, the physiological role of BioH is to remove the methyl group introduced by BioC when the pimeloyl moiety is complete. It allows to synthesize pimeloyl-ACP via the fatty acid synthetic pathway through the hydrolysis of the ester bonds of pimeloyl-ACP esters. This chain is Pimeloyl-[acyl-carrier protein] methyl ester esterase, found in Wigglesworthia glossinidia brevipalpis.